The sequence spans 456 residues: MENLDEIRTDIVESTAPLLQESSSESNGGGEFNGASFSGAVFNLATTIIGAGIMALPATMKILGLIPGITIIVLMAFLTDASIEFLLRFSNIGNQRSYGGVMDDSFGKCGRIMLQVSILVSNIGVLIVYMIIIGDVLAGKNEYGIHHAGMLEGWFGISWWNRRTFVLLVTTLTVFAPLTCFKRIDSLRFTSAISVALAVVFLVITAGITIIKLFTDGLMMPRLLPNVTDLSSFWKLFTVVPVLVNAYICHYNVHSIQNELEDPSRIKPVVRSALAMCSSVYVMTSLFGYLLFGDGTLDDVLANFDTDLGIPFGSVLNDAVRFSYAAHLMLVFPVVFYPLRINIDGLIFPTAPPLTSSESDLRFGSITAGLIAVIFLGANFIPSIWDAFQFTGATAAVCIGFIFPAAVILKDRHNQATKRDKTIAICMIVLAVFSNAIAIYSDAYALFKKHTYVYPI.

The next 11 helical transmembrane spans lie at 37 to 57, 58 to 78, 118 to 138, 164 to 184, 191 to 211, 236 to 256, 273 to 293, 328 to 348, 365 to 385, 388 to 408, and 423 to 443; these read FSGAVFNLATTIIGAGIMALP, ATMKILGLIPGITIIVLMAFL, ILVSNIGVLIVYMIIIGDVLA, TFVLLVTTLTVFAPLTCFKRI, SAISVALAVVFLVITAGITII, LFTVVPVLVNAYICHYNVHSI, ALAMCSSVYVMTSLFGYLLFG, LMLVFPVVFYPLRINIDGLIF, SITAGLIAVIFLGANFIPSIW, FQFTGATAAVCIGFIFPAAVI, and IAICMIVLAVFSNAIAIYSDA.

Belongs to the amino acid/polyamine transporter 2 family. Amino acid/auxin permease (AAAP) (TC 2.A.18.6) subfamily.

The protein localises to the membrane. The polypeptide is Amino acid transporter AVT6B (Arabidopsis thaliana (Mouse-ear cress)).